Here is a 210-residue protein sequence, read N- to C-terminus: DNA-directed RNA polymerases I, II, and III subunit RPABC1 (210 aa).

An N-acetylmethionine modification is found at Met1. Lys81 participates in a covalent cross-link: Glycyl lysine isopeptide (Lys-Gly) (interchain with G-Cter in SUMO2).

Belongs to the archaeal Rpo5/eukaryotic RPB5 RNA polymerase subunit family. Component of the RNA polymerase I (Pol I), RNA polymerase II (Pol II) and RNA polymerase III (Pol III) complexes consisting of at least 13, 12 and 17 subunits, respectively. Pol I complex consists of a ten-subunit catalytic core composed of POLR1A/RPA1, POLR1B/RPA2, POLR1C/RPAC1, POLR1D/RPAC2, POLR1H/RPA12, POLR2E/RPABC1, POLR2F/RPABC2, POLR2H/RPABC3, POLR2K/RPABC4 and POLR2L/RPABC5; a mobile stalk subunit POLR1F/RPA43 protruding from the core and additional subunits homologous to general transcription factors POLR1E/RPA49 and POLR1G/RPA34. Part of Pol I pre-initiation complex (PIC), in which Pol I core assembles with RRN3 and promoter-bound UTBF and SL1/TIF-IB complex. Pol II complex contains a ten-subunit catalytic core composed of POLR2A/RPB1, POLR2B/RPB2, POLR2C/RPB3, POLR2I/RPB9, POLR2J/RPB11, POLR2E/RPABC1, POLR2F/RPABC2, POLR2H/RPABC3, POLR2K/RPABC4 and POLR2L/RPABC5 and a mobile stalk composed of two subunits POLR2D/RPB4 and POLR2G/RPB7. Part of Pol II(G) complex, in which Pol II core associates with an additional subunit POLR2M; unlike conventional Pol II, Pol II(G) functions as a transcriptional repressor. Part of TBP-based Pol II pre-initiation complex (PIC), in which Pol II core assembles with general transcription factors and other specific initiation factors including GTF2E1, GTF2E2, GTF2F1, GTF2F2, TCEA1, ERCC2, ERCC3, GTF2H2, GTF2H3, GTF2H4, GTF2H5, GTF2A1, GTF2A2, GTF2B and TBP; this large multi-subunit PIC complex mediates DNA unwinding and targets Pol II core to the transcription start site where the first phosphodiester bond forms. In Pol II complex, this subunit is present in 2-fold molar excess over the other subunits. Pol III complex consists of a ten-subunit catalytic core composed of POLR3A/RPC1, POLR3B/RPC2, POLR1C/RPAC1, POLR1D/RPAC2, POLR3K/RPC10, POLR2E/RPABC1, POLR2F/RPABC2, POLR2H/RPABC3, POLR2K/RPABC4 and POLR2L/RPABC5; a mobile stalk composed of two subunits POLR3H/RPC8 and CRCP/RPC9, protruding from the core and functioning primarily in transcription initiation; and additional subunits homologous to general transcription factors of the RNA polymerase II machinery, POLR3C/RPC3-POLR3F/RPC6-POLR3G/RPC7 heterotrimer required for transcription initiation and POLR3D/RPC4-POLR3E/RPC5 heterodimer involved in both transcription initiation and termination. Component of the PAQosome complex which is responsible for the biogenesis of several protein complexes and which consists of R2TP complex members RUVBL1, RUVBL2, RPAP3 and PIH1D1, URI complex members PFDN2, PFDN6, PDRG1, UXT and URI1 as well as ASDURF, POLR2E and DNAAF10/WDR92. Interacts with URI1.

It localises to the nucleus. The protein resides in the nucleolus. Its function is as follows. DNA-dependent RNA polymerase catalyzes the transcription of DNA into RNA using the four ribonucleoside triphosphates as substrates. Common component of RNA polymerases I, II and III which synthesize ribosomal RNA precursors, mRNA precursors and many functional non-coding RNAs, and small RNAs, such as 5S rRNA and tRNAs, respectively. Pol II is the central component of the basal RNA polymerase II transcription machinery. Pols are composed of mobile elements that move relative to each other. In Pol II, POLR2E/RPABC1 is part of the lower jaw surrounding the central large cleft and thought to grab the incoming DNA template. Seems to be the major component in this process. This chain is DNA-directed RNA polymerases I, II, and III subunit RPABC1, found in Mus musculus (Mouse).